The sequence spans 243 residues: MNNTSKLLNLSNVSYYIGQQRLLSNINIDIAVNETVSVIGPNGAGKSTLVKLILGLIVPTSGQVTPSEPLQIGYVPQRFSVPPILPLRVSDLLAQACKKRLTAEQRQFIFDKLSLTHLLSRQMLHLSGGETQRVLLARALLDKPNLLILDEPMQGLDPETEVWLYQFIDELPEFLRCAMLVVSHDLHWVMKGSRRVICLNKHICCEGQPSELAISSEFQKLFGHHYEQPYVHQPHACEHHAPS.

The ABC transporter domain maps to 8-225 (LNLSNVSYYI…SEFQKLFGHH (218 aa)). 40–47 (GPNGAGKS) contributes to the ATP binding site.

It belongs to the ABC transporter superfamily. Zinc importer (TC 3.A.1.15.5) family. In terms of assembly, the complex is composed of two ATP-binding proteins (ZnuC), two transmembrane proteins (ZnuB) and a solute-binding protein (ZnuA).

It localises to the cell inner membrane. It catalyses the reaction Zn(2+)(out) + ATP(in) + H2O(in) = Zn(2+)(in) + ADP(in) + phosphate(in) + H(+)(in). Its function is as follows. Part of the ABC transporter complex ZnuABC involved in zinc import. Responsible for energy coupling to the transport system. The protein is Zinc import ATP-binding protein ZnuC of Psychrobacter cryohalolentis (strain ATCC BAA-1226 / DSM 17306 / VKM B-2378 / K5).